Consider the following 400-residue polypeptide: Acetate kinase (400 aa).

Asparagine 9 serves as a coordination point for Mg(2+). Residue lysine 16 participates in ATP binding. Arginine 90 is a substrate binding site. Aspartate 147 serves as the catalytic Proton donor/acceptor. Residues 207–211 (HIGNG), 282–284 (DLR), and 330–334 (GIGEN) each bind ATP. Glutamate 385 is a Mg(2+) binding site.

This sequence belongs to the acetokinase family. Homodimer. Requires Mg(2+) as cofactor. The cofactor is Mn(2+).

It is found in the cytoplasm. It carries out the reaction acetate + ATP = acetyl phosphate + ADP. Its pathway is metabolic intermediate biosynthesis; acetyl-CoA biosynthesis; acetyl-CoA from acetate: step 1/2. Functionally, catalyzes the formation of acetyl phosphate from acetate and ATP. Can also catalyze the reverse reaction. The chain is Acetate kinase from Staphylococcus aureus (strain JH1).